The chain runs to 272 residues: Imidazole glycerol phosphate synthase subunit HisF (272 aa).

Active-site residues include aspartate 12 and aspartate 131.

This sequence belongs to the HisA/HisF family. As to quaternary structure, heterodimer of HisH and HisF.

The protein localises to the cytoplasm. The enzyme catalyses 5-[(5-phospho-1-deoxy-D-ribulos-1-ylimino)methylamino]-1-(5-phospho-beta-D-ribosyl)imidazole-4-carboxamide + L-glutamine = D-erythro-1-(imidazol-4-yl)glycerol 3-phosphate + 5-amino-1-(5-phospho-beta-D-ribosyl)imidazole-4-carboxamide + L-glutamate + H(+). The protein operates within amino-acid biosynthesis; L-histidine biosynthesis; L-histidine from 5-phospho-alpha-D-ribose 1-diphosphate: step 5/9. IGPS catalyzes the conversion of PRFAR and glutamine to IGP, AICAR and glutamate. The HisF subunit catalyzes the cyclization activity that produces IGP and AICAR from PRFAR using the ammonia provided by the HisH subunit. The chain is Imidazole glycerol phosphate synthase subunit HisF from Methanopyrus kandleri (strain AV19 / DSM 6324 / JCM 9639 / NBRC 100938).